The following is a 164-amino-acid chain: uncharacterized protein (164 aa).

2 consecutive transmembrane segments (helical) span residues 11-31 and 51-71; these read FYVN…PSLL and CQQY…LVLV.

Its subcellular location is the membrane. This is an uncharacterized protein from Saccharomyces cerevisiae (strain ATCC 204508 / S288c) (Baker's yeast).